The following is a 158-amino-acid chain: Cell number regulator 11 (158 aa).

2 helical membrane passes run 49–67 and 78–94; these read FGDLHTCCLTLWCPCVTFG and TCCMSGTLYYLLSTIGW.

Belongs to the cornifelin family.

It localises to the membrane. In Zea mays (Maize), this protein is Cell number regulator 11 (CNR11).